Reading from the N-terminus, the 196-residue chain is MTSFYIMLLAAYLIGAIPTGVVLTRLVGASDIRNSGSGNIGATNVYRVAGKKLGVLTLIGDALKGAVPVLIAIKLTDLGDAQVGAVAAAAFIGHCYPVYLKFKGGKGVATALGIFLVLSPLAVLGAFAVFALLVWKWRYVSLGSICAAAAIPILVYFTEGNPALVATTMFISLIVICRHHQNIQRLLNGSENRFKA.

Helical transmembrane passes span Phe-4 to Thr-24, Leu-53 to Ile-73, Leu-78 to Val-98, Ile-114 to Val-134, and Val-140 to Gly-160.

It belongs to the PlsY family. In terms of assembly, probably interacts with PlsX.

It is found in the cell inner membrane. The enzyme catalyses an acyl phosphate + sn-glycerol 3-phosphate = a 1-acyl-sn-glycero-3-phosphate + phosphate. The protein operates within lipid metabolism; phospholipid metabolism. In terms of biological role, catalyzes the transfer of an acyl group from acyl-phosphate (acyl-PO(4)) to glycerol-3-phosphate (G3P) to form lysophosphatidic acid (LPA). This enzyme utilizes acyl-phosphate as fatty acyl donor, but not acyl-CoA or acyl-ACP. The polypeptide is Glycerol-3-phosphate acyltransferase (Syntrophotalea carbinolica (strain DSM 2380 / NBRC 103641 / GraBd1) (Pelobacter carbinolicus)).